A 463-amino-acid polypeptide reads, in one-letter code: uncharacterized protein (463 aa).

The next 11 helical transmembrane spans lie at 6–26 (ILPV…FMLL), 31–51 (TFIS…SLSA), 60–80 (FIYA…IVSM), 101–123 (VRGP…LFFW), 130–152 (LIGA…AAMA), 189–209 (ASIP…FIMI), 242–262 (SILA…MLLF), 269–289 (ATAL…FFVY), 304–324 (GFKF…FFYL), 413–433 (AIWV…AAIC), and 443–463 (KNFI…VMML).

It localises to the cell membrane. This is an uncharacterized protein from Bacillus subtilis (strain 168).